Reading from the N-terminus, the 158-residue chain is Protein Smg homolog (158 aa).

Belongs to the Smg family.

The protein is Protein Smg homolog of Coxiella burnetii (strain Dugway 5J108-111).